The following is a 526-amino-acid chain: Estrogen receptor beta (526 aa).

The segment at 1–145 (MDIKNSPSNL…SPSSKRDAHF (145 aa)) is modulating. Phosphoserine; by MAPK is present on residues Ser84 and Ser102. NR C4-type zinc fingers lie at residues 146–166 (CAVC…CEGC) and 182–206 (CPAT…LRKC). The nuclear receptor DNA-binding region spans 146–211 (CAVCSDYASG…RLRKCYEVGM (66 aa)). An NR LBD domain is found at 261 to 494 (SPEQLVLTLL…DLLLEMLNAH (234 aa)). The tract at residues 502-526 (LVTGSERSRMEESESKEGSQKPQAQ) is disordered. The segment covering 507–520 (ERSRMEESESKEGS) has biased composition (basic and acidic residues).

It belongs to the nuclear hormone receptor family. NR3 subfamily. In terms of assembly, binds DNA as a homodimer. Can form a heterodimer with ESR1. Interacts with NCOA1, NCOA3, NCOA5 and NCOA6 coactivators, leading to a strong increase of transcription of target genes. Interacts with UBE1C and AKAP13. Interacts with DNTTIP2. Interacts with CCDC62 in the presence of estradiol/E2; this interaction seems to enhance the transcription of target genes. Interacts with DNAAF4. Interacts with PRMT2. Interacts with CCAR2 (via N-terminus) in a ligand-independent manner. Interacts with RBM39, in the presence of estradiol (E2). Interacts with STUB1/CHIP. Phosphorylation at Ser-84 and Ser-102 recruits NCOA1.

It localises to the nucleus. Nuclear hormone receptor. Binds estrogens with an affinity similar to that of ESR1/ER-alpha, and activates expression of reporter genes containing estrogen response elements (ERE) in an estrogen-dependent manner. The protein is Estrogen receptor beta (ESR2) of Sus scrofa (Pig).